Here is a 313-residue protein sequence, read N- to C-terminus: MLDKVLKIATRQSPLALWQAQYVKARLEQAHPGLKVELVPMVTRGDVILDTPLAKVGGKGLFVKELELAMLEGRADIAVHSMKDVPVEFPEGLGLVTICERDDPRDAFVSNRYASIDELPAGSVVGTSSLRRQCQLAATRPDLAIRSLRGNVGTRLSKLDNGEYDAIILAAAGLKRLQLEARIRQPLSPEQSLPAVGQGAVGIECRLDDAWTRGLLAPLNHTETAVRVRAERAMNTRLEGGCQVPIGSYAELKDGELWLRALVGAPDGSQLVRGERRGPAEQAEALGISLAEELLDNGAREILAAVYDGEAPR.

Cysteine 242 carries the post-translational modification S-(dipyrrolylmethanemethyl)cysteine.

Belongs to the HMBS family. As to quaternary structure, monomer. The cofactor is dipyrromethane.

It carries out the reaction 4 porphobilinogen + H2O = hydroxymethylbilane + 4 NH4(+). Its pathway is porphyrin-containing compound metabolism; protoporphyrin-IX biosynthesis; coproporphyrinogen-III from 5-aminolevulinate: step 2/4. Its function is as follows. Tetrapolymerization of the monopyrrole PBG into the hydroxymethylbilane pre-uroporphyrinogen in several discrete steps. In Klebsiella pneumoniae subsp. pneumoniae (strain ATCC 700721 / MGH 78578), this protein is Porphobilinogen deaminase.